An 838-amino-acid polypeptide reads, in one-letter code: Outer membrane usher protein YraJ (838 aa).

The N-terminal stretch at 1–40 (MPQRHHQGHKRTPKQLALIIKRCLPMVLTGSGMLCTTANA) is a signal peptide. An intrachain disulfide couples C815 to C837.

This sequence belongs to the fimbrial export usher family.

The protein localises to the cell outer membrane. Functionally, part of the yraHIJK fimbrial operon. Could contribute to adhesion to various surfaces in specific environmental niches. Increases adhesion to eukaryotic T24 bladder epithelial cells in the absence of fim operon. Probably involved in the export and assembly of fimbrial subunits across the outer membrane. This chain is Outer membrane usher protein YraJ (yraJ), found in Escherichia coli (strain K12).